Reading from the N-terminus, the 542-residue chain is CTP synthase (542 aa).

An amidoligase domain region spans residues 1-265; that stretch reads MTRYVFITGG…DREILAHFQM (265 aa). Serine 13 contacts CTP. Serine 13 provides a ligand contact to UTP. ATP contacts are provided by residues 14 to 19 and aspartate 71; that span reads SLGKGL. Aspartate 71 and glutamate 139 together coordinate Mg(2+). Residues 146–148, 186–191, and lysine 222 contribute to the CTP site; these read DIE and KTKPTQ. UTP contacts are provided by residues 186–191 and lysine 222; that span reads KTKPTQ. 238–240 is an ATP binding site; the sequence is RDV. One can recognise a Glutamine amidotransferase type-1 domain in the interval 291–541; sequence TIAIVGKYTG…IAAAIEQSRL (251 aa). L-glutamine is bound at residue glycine 353. Cysteine 380 acts as the Nucleophile; for glutamine hydrolysis in catalysis. L-glutamine-binding positions include 381–384, glutamate 404, and arginine 469; that span reads FGMQ. Active-site residues include histidine 514 and glutamate 516.

The protein belongs to the CTP synthase family. In terms of assembly, homotetramer.

It carries out the reaction UTP + L-glutamine + ATP + H2O = CTP + L-glutamate + ADP + phosphate + 2 H(+). The catalysed reaction is L-glutamine + H2O = L-glutamate + NH4(+). It catalyses the reaction UTP + NH4(+) + ATP = CTP + ADP + phosphate + 2 H(+). Its pathway is pyrimidine metabolism; CTP biosynthesis via de novo pathway; CTP from UDP: step 2/2. Its activity is regulated as follows. Allosterically activated by GTP, when glutamine is the substrate; GTP has no effect on the reaction when ammonia is the substrate. The allosteric effector GTP functions by stabilizing the protein conformation that binds the tetrahedral intermediate(s) formed during glutamine hydrolysis. Inhibited by the product CTP, via allosteric rather than competitive inhibition. In terms of biological role, catalyzes the ATP-dependent amination of UTP to CTP with either L-glutamine or ammonia as the source of nitrogen. Regulates intracellular CTP levels through interactions with the four ribonucleotide triphosphates. The sequence is that of CTP synthase from Methylorubrum populi (strain ATCC BAA-705 / NCIMB 13946 / BJ001) (Methylobacterium populi).